Reading from the N-terminus, the 255-residue chain is MPALRTLLPHLGLFLCLALCFSPSFSLSNNESCILYDQVYPSDNLINASAEEVSGENTTYTVTVPVNDSVSAVILKAEKDNKPVGTWSGAYEKCNNSVVYNLTSLNNSAFQTNWTVPSSEDVTKVNLTIFIVINRTATVSSVKLEPKETSSLASTPESQTSAMTTAMTSAMTTAKTTAVATNSSTDVTSDNSTAVTTANSTAVTTANSTAVTTAKTTTMTTATTTAKSLAIRTLCSPLAGALHILLVFLISKLLF.

A signal peptide spans 1-26 (MPALRTLLPHLGLFLCLALCFSPSFS). 3 N-linked (GlcNAc...) asparagine glycosylation sites follow: asparagine 57, asparagine 67, and asparagine 126. Residue serine 236 is the site of GPI-anchor amidated serine attachment. The propeptide at 237-255 (PLAGALHILLVFLISKLLF) is removed in mature form.

In terms of processing, N-glycosylated. Post-translationally, GPI-anchored.

It localises to the apical cell membrane. In terms of biological role, modulates leading keratinocyte migration and cellular adhesion to matrix proteins during a wound-healing response and promotes wound repair. May play a role during trichilemmal differentiation of the hair follicle. This chain is Placenta-expressed transcript 1 protein (Plet1), found in Rattus norvegicus (Rat).